We begin with the raw amino-acid sequence, 330 residues long: D-lactate dehydrogenase (330 aa).

Residues Arg-156–Ile-157, Asp-176, Val-206–Pro-207, Ala-233–Arg-235, and Asp-259 each bind NAD(+). Arg-235 is an active-site residue. Glu-264 is a catalytic residue. The Proton donor role is filled by His-296.

This sequence belongs to the D-isomer specific 2-hydroxyacid dehydrogenase family.

The catalysed reaction is (R)-lactate + NAD(+) = pyruvate + NADH + H(+). The chain is D-lactate dehydrogenase (ldhD) from Staphylococcus aureus (strain MRSA252).